A 301-amino-acid chain; its full sequence is D-alanine--D-alanine ligase (301 aa).

The ATP-grasp domain maps to 99–294 (KCILKAANIR…FSELIDMIID (196 aa)). 126-181 (IEGMGYPVVVKPTHGGSSVATFIIKEEKDIKNAVTEAFKWDSEVIIEKFIKGDEIT) is a binding site for ATP. Positions 248, 261, and 263 each coordinate Mg(2+).

It belongs to the D-alanine--D-alanine ligase family. Mg(2+) is required as a cofactor. Requires Mn(2+) as cofactor.

Its subcellular location is the cytoplasm. It carries out the reaction 2 D-alanine + ATP = D-alanyl-D-alanine + ADP + phosphate + H(+). The protein operates within cell wall biogenesis; peptidoglycan biosynthesis. Functionally, cell wall formation. The polypeptide is D-alanine--D-alanine ligase (Clostridium botulinum (strain Eklund 17B / Type B)).